A 410-amino-acid polypeptide reads, in one-letter code: Serine hydroxymethyltransferase (410 aa).

(6S)-5,6,7,8-tetrahydrofolate is bound by residues leucine 116 and 120–122 (GHL). Lysine 225 carries the post-translational modification N6-(pyridoxal phosphate)lysine.

It belongs to the SHMT family. In terms of assembly, homodimer. It depends on pyridoxal 5'-phosphate as a cofactor.

It is found in the cytoplasm. The enzyme catalyses (6R)-5,10-methylene-5,6,7,8-tetrahydrofolate + glycine + H2O = (6S)-5,6,7,8-tetrahydrofolate + L-serine. It participates in one-carbon metabolism; tetrahydrofolate interconversion. It functions in the pathway amino-acid biosynthesis; glycine biosynthesis; glycine from L-serine: step 1/1. Functionally, catalyzes the reversible interconversion of serine and glycine with tetrahydrofolate (THF) serving as the one-carbon carrier. This reaction serves as the major source of one-carbon groups required for the biosynthesis of purines, thymidylate, methionine, and other important biomolecules. Also exhibits THF-independent aldolase activity toward beta-hydroxyamino acids, producing glycine and aldehydes, via a retro-aldol mechanism. In Lacticaseibacillus casei (strain BL23) (Lactobacillus casei), this protein is Serine hydroxymethyltransferase.